A 140-amino-acid chain; its full sequence is Nucleoside diphosphate kinase (140 aa).

Residues Lys-11, Phe-59, Arg-87, Thr-93, Arg-104, and Asn-114 each contribute to the ATP site. His-117 acts as the Pros-phosphohistidine intermediate in catalysis.

Belongs to the NDK family. Homotetramer. Requires Mg(2+) as cofactor.

It localises to the cytoplasm. It carries out the reaction a 2'-deoxyribonucleoside 5'-diphosphate + ATP = a 2'-deoxyribonucleoside 5'-triphosphate + ADP. The enzyme catalyses a ribonucleoside 5'-diphosphate + ATP = a ribonucleoside 5'-triphosphate + ADP. Functionally, major role in the synthesis of nucleoside triphosphates other than ATP. The ATP gamma phosphate is transferred to the NDP beta phosphate via a ping-pong mechanism, using a phosphorylated active-site intermediate. The sequence is that of Nucleoside diphosphate kinase from Methylocella silvestris (strain DSM 15510 / CIP 108128 / LMG 27833 / NCIMB 13906 / BL2).